A 500-amino-acid chain; its full sequence is Farnesylcysteine lyase (500 aa).

Residues 1–24 (MKDFPIAISLLFALLSPVLLPCSG) form the signal peptide. N-linked (GlcNAc...) asparagine glycosylation is found at Asn56, Asn113, Asn211, and Asn281.

The protein belongs to the prenylcysteine oxidase family. FAD serves as cofactor. As to expression, expressed in seedilings, flowers, stems, leaves and roots.

It is found in the lysosome. The catalysed reaction is S-(2E,6E)-farnesyl-L-cysteine + O2 + H2O = (2E,6E)-farnesal + L-cysteine + H2O2. Involved in the degradation of prenylcysteine. Cleaves specifically the thioether bond of S-farnesyl-L-cysteine and has no activity with S-geranylgeranyl-L-cysteine. Also recognizes N-acetyl-farnesylcysteine and may have a role in deprenylation of farnesylated proteins. The protein is Farnesylcysteine lyase of Arabidopsis thaliana (Mouse-ear cress).